The following is a 1585-amino-acid chain: MTLSTEESIEMFGDINLTLGMLNKEDIVNKEDIYSHLTSVIQNTDILDDAIVQRLIYYASKDMRDNNMLREIRMLAGEVLVSLAAHDFNSVMYEVQSNFRILELPDEFVVLALAELATSYVSQSIPFMMMTLLTMQTMLRLAEDERMKGTFCIALEKFSKAIYKYVNHWRDFPYPRLDANRLSDKIFMLFWYIMEKWAPLASPMQTLSIVKAHGPTVSLLLHREDFRGYALGQVPWLLNQYKDKEIDFHVTQSLKQILTAAVLYDIGLPRSLRRSIFINLLQQICRAPEPPVKENEMKASSCFLILAHSNPGELMEFFDEQVRSNNEAIRVGILTLLRLAVNADEPRLRDHIISIERTVKIVMGDLSTKVRNSVLLLIQTMCEKSYIEAREGWPLIDYVFSQFATLNRNLEKPVKTNFHENEKEEESVRETSLEVLKTLDPLVIGMPQVLWPRILTFVVPAEYTEALEPLFSIIRILIMAEEKKQHSAKESTALVVSTGAVKLPSPQQLLARLLVISMPASLGELRGAGAIGLLKILPEIIHPKLVDLWKTRLPELLQPLEGKNISTVLWETMLLQLLKESLWKISDVAWTIQLTQDFKQQMGSYSNNSTEKKFLWKALGTTLACCQDSDFVNSQIKEFLTAPNQLGDQRQGITSILGYCAENHLDIVLKVLKTFQNQEKFFMNRCKSLFSGKKSLTKTDVMVIYGAVALHAPKKQLLSRLNQDIISQVLSLHGQCSQVLGMSVMNKDMDLQMSFTRSITEIGIAVQDAEDQGFQFSYKEMLIGYMLDFIRDEPLDSLASPIRWKALIAIRYLSKLKPQLSLQDHLNILEENIRRLLPLPPLENLKSEGQTDKDKEHIQFLYERSMDALGKLLKTMMWDNVNAEDCQEMFNLLQMWLVSQKEWERERAFQITAKVLTNDIEAPENFKIGSLLGLLAPHSCDTLPTIRQAAASSTIGLFYIKGIHLEVERLQGLQEGLESDDVQVQIKISSKIAKIVSKFIPNEEILMFLEEMLDGLESLNPTCTKACGIWMITVLKQQGAALEDQLLEILGTIYHHMPVLRQKEESFQFILEAISQIASFHMDTVVVNLLQKPLPFDRDTKTLWKALAEKPASSGKLLQALIDKLETELEDDIARVEAISVACAMYEVISMGTSVTGLYPELFTLLLKLVSCTLGQKMLTCPWSHRRHVMQQGEQQQIPDPCRLSTATLKCLQAQAMREGLAKESDEGDNLWTLLSSPSTHHIGVCSLARSMAVWQHGVILDIMEQLLSSLTSSSENYRITGAAFFSELMKEPILWKHGNLRNVLILMDQSAWDSNATLRQMAIRGLGNTASGAPHKVKKHKQLMLESIIRGLYHLARTEVVCESLKALKKILELLTDRDVSFYFKEIVLQTRTFFEDEQDDVRLTAIFLFEDLAPLTGRRWKIFFAEEIKKSLISFLLHLWDPNPKIGVACRDVLMVCIPFLGLQELYGVLDRLLDQDLPRARDFYRQFCVKLAKKNQEILWILHTHSFTFFTSTWEVIRSAAVKLTDAVVLNLTSQYVELLDREQLTTRLQALRQDPCISVQRAAEAALQTLLRRCKETSIPL.

15 HEAT repeats span residues 28–65 (VNKE…DMRD), 228–263 (GYAL…AAVL), 272–309 (LRRS…LAHS), 310–346 (NPGE…ADEP), 405–445 (TLNR…LVIG), 531–569 (IGLL…STVL), 572–611 (TMLL…NSTE), 662–699 (ENHL…LTKT), 777–819 (SYKE…LKPQ), 964–1001 (HLEV…KFIP), 1021–1059 (PTCT…HMPV), 1112–1151 (ASSG…VISM), 1157–1195 (GLYP…QGEQ), 1258–1295 (GVIL…EPIL), and 1363–1402 (CESL…EQDD).

Found in a complex at least composed of MROH2B, PRKACA isoform 2 and TCP11. Interacts with PRKACA. Interacts with TCP11. Post-translationally, constitutively phosphorylated on serine and threonine residues in acrosomal region of the sperm head, midpiece and flagellar regions of noncapacitated spermatozoa. Phosphorylation on tyrosine residues increases upon sperm capacitation within the acrosomal and tail regions in a protein kinase A (PKA)-dependent signaling pathway.

It localises to the cytoplasm. Its subcellular location is the cytoplasmic vesicle. The protein resides in the secretory vesicle. It is found in the acrosome. The protein localises to the cell projection. It localises to the cilium. Its subcellular location is the flagellum. Its function is as follows. May play a role in the process of sperm capacitation. This chain is Maestro heat-like repeat-containing protein family member 2B, found in Homo sapiens (Human).